A 226-amino-acid chain; its full sequence is 7-cyano-7-deazaguanine synthase (226 aa).

ATP is bound at residue 10–20; sequence LSGGLDSATAA. Zn(2+) is bound by residues Cys191, Cys199, Cys202, and Cys205.

It belongs to the QueC family. It depends on Zn(2+) as a cofactor.

It carries out the reaction 7-carboxy-7-deazaguanine + NH4(+) + ATP = 7-cyano-7-deazaguanine + ADP + phosphate + H2O + H(+). Its pathway is purine metabolism; 7-cyano-7-deazaguanine biosynthesis. In terms of biological role, catalyzes the ATP-dependent conversion of 7-carboxy-7-deazaguanine (CDG) to 7-cyano-7-deazaguanine (preQ(0)). The sequence is that of 7-cyano-7-deazaguanine synthase from Synechococcus sp. (strain CC9605).